The chain runs to 461 residues: Bifunctional protein GlmU (461 aa).

Residues 1–229 are pyrophosphorylase; that stretch reads MEKYVVVLAA…FSESLGVNDR (229 aa). UDP-N-acetyl-alpha-D-glucosamine is bound by residues 8–11, Lys22, Gln72, and 77–78; these read LAAG and GT. A Mg(2+)-binding site is contributed by Asp102. The UDP-N-acetyl-alpha-D-glucosamine site is built by Gly139, Glu154, Asn169, and Asn227. Asn227 is a binding site for Mg(2+). Residues 230–250 form a linker region; the sequence is VALAQATKTMQRRINEAHMRD. The interval 251-461 is N-acetyltransferase; sequence GVSFIDPDTA…LPLSKDKDWE (211 aa). 2 residues coordinate UDP-N-acetyl-alpha-D-glucosamine: Arg332 and Lys350. His362 serves as the catalytic Proton acceptor. UDP-N-acetyl-alpha-D-glucosamine-binding residues include Tyr365 and Asn376. Residues 385-386, Ala422, and Arg439 contribute to the acetyl-CoA site; that span reads NY.

In the N-terminal section; belongs to the N-acetylglucosamine-1-phosphate uridyltransferase family. It in the C-terminal section; belongs to the transferase hexapeptide repeat family. As to quaternary structure, homotrimer. Mg(2+) serves as cofactor.

Its subcellular location is the cytoplasm. It catalyses the reaction alpha-D-glucosamine 1-phosphate + acetyl-CoA = N-acetyl-alpha-D-glucosamine 1-phosphate + CoA + H(+). The catalysed reaction is N-acetyl-alpha-D-glucosamine 1-phosphate + UTP + H(+) = UDP-N-acetyl-alpha-D-glucosamine + diphosphate. Its pathway is nucleotide-sugar biosynthesis; UDP-N-acetyl-alpha-D-glucosamine biosynthesis; N-acetyl-alpha-D-glucosamine 1-phosphate from alpha-D-glucosamine 6-phosphate (route II): step 2/2. It functions in the pathway nucleotide-sugar biosynthesis; UDP-N-acetyl-alpha-D-glucosamine biosynthesis; UDP-N-acetyl-alpha-D-glucosamine from N-acetyl-alpha-D-glucosamine 1-phosphate: step 1/1. The protein operates within bacterial outer membrane biogenesis; LPS lipid A biosynthesis. In terms of biological role, catalyzes the last two sequential reactions in the de novo biosynthetic pathway for UDP-N-acetylglucosamine (UDP-GlcNAc). The C-terminal domain catalyzes the transfer of acetyl group from acetyl coenzyme A to glucosamine-1-phosphate (GlcN-1-P) to produce N-acetylglucosamine-1-phosphate (GlcNAc-1-P), which is converted into UDP-GlcNAc by the transfer of uridine 5-monophosphate (from uridine 5-triphosphate), a reaction catalyzed by the N-terminal domain. This chain is Bifunctional protein GlmU, found in Lactobacillus helveticus (strain DPC 4571).